The following is a 248-amino-acid chain: Probable transcriptional regulatory protein ECH_0704 (248 aa).

Residues 1 to 21 (MAGHSQFANIKHRKGAQDAKR) form a disordered region.

It belongs to the TACO1 family.

The protein resides in the cytoplasm. The protein is Probable transcriptional regulatory protein ECH_0704 of Ehrlichia chaffeensis (strain ATCC CRL-10679 / Arkansas).